A 213-amino-acid chain; its full sequence is Adenylate kinase (213 aa).

10–15 (GSGKGS) is a binding site for ATP. The NMP stretch occupies residues 30–60 (STGNLFRAILKEDSELARKIKEINVSGGKLV). Residues Thr-31, Arg-36, 58–60 (KLV), 87–90 (GYPR), and Gln-94 contribute to the AMP site. An LID region spans residues 123 to 160 (GRWMCPKCAGIYNIHFKKPQVDGVCDNDQATLYQRADD). Residue Arg-124 participates in ATP binding. Positions 127 and 130 each coordinate Zn(2+). An ATP-binding site is contributed by 133–134 (IY). Zn(2+) contacts are provided by Cys-147 and Asp-150. The AMP site is built by Arg-157 and Arg-168. Residue Gln-196 participates in ATP binding.

It belongs to the adenylate kinase family. Monomer.

It is found in the cytoplasm. The catalysed reaction is AMP + ATP = 2 ADP. It participates in purine metabolism; AMP biosynthesis via salvage pathway; AMP from ADP: step 1/1. Functionally, catalyzes the reversible transfer of the terminal phosphate group between ATP and AMP. Plays an important role in cellular energy homeostasis and in adenine nucleotide metabolism. The protein is Adenylate kinase of Ureaplasma urealyticum serovar 10 (strain ATCC 33699 / Western).